A 1487-amino-acid polypeptide reads, in one-letter code: Secretory phospholipase A2 receptor (1487 aa).

The signal sequence occupies residues 1–26 (MVQWLAMLQLLWLQQLLLLGIHQGIA). Topologically, residues 27–1396 (QDLTHIQEPS…AQPEKGLSHS (1370 aa)) are extracellular. Positions 42 to 165 (KGIFIIQSES…SSGGDICEHP (124 aa)) constitute a Ricin B-type lectin domain. Intrachain disulfides connect C55/C68, C93/C110, C181/C207, and C195/C222. An N-linked (GlcNAc...) asparagine glycan is attached at N97. The Fibronectin type-II domain occupies 176–224 (AHGMPCVFPFQFKGHWHHDCIREGQKEHLLWCATTSRYEEDEKWGFCPD). N239 carries an N-linked (GlcNAc...) asparagine glycan. C-type lectin domains are found at residues 241–357 (SSRI…YICK), 387–504 (FNRK…YICK), 524–643 (HGRF…MSLC), 673–797 (GLAS…WICR), 819–938 (YQNA…SICK), and 964–1095 (FNYK…GFVC). Intrachain disulfides connect C263/C356, C333/C348, C408/C503, C480/C495, C617/C634, C699/C796, C774/C788, C840/C937, C914/C929, and C1066/C1086. An N-linked (GlcNAc...) asparagine glycan is attached at N928. N-linked (GlcNAc...) asparagine glycosylation is found at N1107, N1122, and N1131. C-type lectin domains lie at 1120-1231 (YGNR…GAIC) and 1256-1377 (FKGN…FICK). 3 disulfides stabilise this stretch: C1208-C1222, C1279-C1376, and C1353-C1368. The helical transmembrane segment at 1397-1417 (IVPVTVTLTLIIALGIFMLCF) threads the bilayer. Residues 1418–1487 (WIYKQKSDIF…HKGRPICISP (70 aa)) are Cytoplasmic-facing. The short motif at 1435-1441 (GSYYPTL) is the Endocytosis signal element. The span at 1463–1475 (DEEVRDAPATESK) shows a compositional bias: basic and acidic residues. The segment at 1463–1487 (DEEVRDAPATESKRGHKGRPICISP) is disordered.

Interacts with sPLA2-IB/PLA2G1B; this interaction mediates intracellular signaling as well as clearance of extracellular sPLA2-IB/PLA2G1B via endocytotic pathway. Interacts with sPLA2-X/PLA2G10; this interaction mediates sPLA2-X/PLA2G10 clearance and inactivation. The secretory phospholipase A2 receptor form may be produced by the action of metalloproteinases. It contains all extracellular domains and only lacks transmembrane and cytosolic regions. It is however unclear whether this form is produced by proteolytic cleavage as suggested by some experiments reported by PubMed:11830583, or by alternative splicing. As to expression, widely expressed. Present in type II alveolar epithelial cells and a subset of splenic lymphocytes. Present at the surface of polymorphonuclear neutrophils (at protein level).

The protein resides in the cell membrane. The protein localises to the secreted. Its function is as follows. Receptor for secretory phospholipase A2 (sPLA2). Acts as a receptor for phospholipases sPLA2-IB/PLA2G1B, sPLA2-X/PLA2G10 and, with lower affinity, sPLA2-IIA/PLA2G2A. Also able to bind to snake PA2-like toxins. Although its precise function remains unclear, binding of sPLA2 to its receptor participates in both positive and negative regulation of sPLA2 functions as well as clearance of sPLA2. Binding of sPLA2-IB/PLA2G1B induces various effects depending on the cell type, such as activation of the mitogen-activated protein kinase (MAPK) cascade to induce cell proliferation, the production of lipid mediators, selective release of arachidonic acid in bone marrow-derived mast cells. In neutrophils, binding of sPLA2-IB/PLA2G1B can activate p38 MAPK to stimulate elastase release and cell adhesion. May be involved in responses in pro-inflammatory cytokine productions during endotoxic shock. Also has endocytic properties and rapidly internalizes sPLA2 ligands, which is particularly important for the clearance of extracellular sPLA2s to protect their potent enzymatic activities. The soluble secretory phospholipase A2 receptor form is circulating and acts as a negative regulator of sPLA2 functions by blocking the biological functions of sPLA2-IB/PLA2G1B and sPLA2-X/PLA2G10. In podocytes, binding of sPLA2-IB/PLA2G1B can regulate podocyte survival and glomerular homeostasis. This Mus musculus (Mouse) protein is Secretory phospholipase A2 receptor (Pla2r1).